The primary structure comprises 84 residues: Small ribosomal subunit protein uS17 (84 aa).

The protein belongs to the universal ribosomal protein uS17 family. Part of the 30S ribosomal subunit.

In terms of biological role, one of the primary rRNA binding proteins, it binds specifically to the 5'-end of 16S ribosomal RNA. This chain is Small ribosomal subunit protein uS17, found in Clostridium novyi (strain NT).